The sequence spans 431 residues: tRNA-specific 2-thiouridylase MnmA (431 aa).

ATP contacts are provided by residues 35-42 (AMSGGVDS) and L61. Catalysis depends on C129, which acts as the Nucleophile. The cysteines at positions 129 and 226 are disulfide-linked. G153 contributes to the ATP binding site. Residues 176–178 (RDQ) are interaction with tRNA. C226 functions as the Cysteine persulfide intermediate in the catalytic mechanism. Residues 407–431 (PKPPNEDLLDTNESSDLVSPKRSAC) are disordered.

The protein belongs to the MnmA/TRMU family.

It localises to the cytoplasm. The enzyme catalyses S-sulfanyl-L-cysteinyl-[protein] + uridine(34) in tRNA + AH2 + ATP = 2-thiouridine(34) in tRNA + L-cysteinyl-[protein] + A + AMP + diphosphate + H(+). Catalyzes the 2-thiolation of uridine at the wobble position (U34) of tRNA, leading to the formation of s(2)U34. The chain is tRNA-specific 2-thiouridylase MnmA from Beijerinckia indica subsp. indica (strain ATCC 9039 / DSM 1715 / NCIMB 8712).